Here is a 116-residue protein sequence, read N- to C-terminus: Ribonuclease P protein component (116 aa).

This sequence belongs to the RnpA family. In terms of assembly, consists of a catalytic RNA component (M1 or rnpB) and a protein subunit.

The catalysed reaction is Endonucleolytic cleavage of RNA, removing 5'-extranucleotides from tRNA precursor.. Functionally, RNaseP catalyzes the removal of the 5'-leader sequence from pre-tRNA to produce the mature 5'-terminus. It can also cleave other RNA substrates such as 4.5S RNA. The protein component plays an auxiliary but essential role in vivo by binding to the 5'-leader sequence and broadening the substrate specificity of the ribozyme. In Exiguobacterium sibiricum (strain DSM 17290 / CCUG 55495 / CIP 109462 / JCM 13490 / 255-15), this protein is Ribonuclease P protein component.